The chain runs to 273 residues: MDLLLLQINPIAFHLGPIPVRWYGLLIVSGIILAYVVGQREAVKRGLPEDFLADLLLWAVPISIICARIYYVSMRWDYYSENPGKIIEIWNGGIAIHGALIGAFVTAYIFTRIKNVSFLRVADIAAPSILIGQIIGRWGNFMNQEAYGGPVSKEFLENLMLPDWIINQMYIEELGTYVHPTFLYESVWNLIGLIILLILRKVNLNRGEIFFSYLIWYSIGRFYIEGMRTDSLYLVGDLRSAQIVSIIGIVVGLGAIIYRRIKVKPAMKYLDNK.

Transmembrane regions (helical) follow at residues 18–38 (IPVR…YVVG), 47–67 (LPED…IICA), 89–109 (IWNG…TAYI), and 116–136 (VSFL…QIIG). An a 1,2-diacyl-sn-glycero-3-phospho-(1'-sn-glycerol)-binding site is contributed by arginine 137. 3 consecutive transmembrane segments (helical) span residues 178–198 (VHPT…ILLI), 207–227 (GEIF…IEGM), and 238–258 (LRSA…AIIY).

Belongs to the Lgt family.

Its subcellular location is the cell membrane. It carries out the reaction L-cysteinyl-[prolipoprotein] + a 1,2-diacyl-sn-glycero-3-phospho-(1'-sn-glycerol) = an S-1,2-diacyl-sn-glyceryl-L-cysteinyl-[prolipoprotein] + sn-glycerol 1-phosphate + H(+). It functions in the pathway protein modification; lipoprotein biosynthesis (diacylglyceryl transfer). In terms of biological role, catalyzes the transfer of the diacylglyceryl group from phosphatidylglycerol to the sulfhydryl group of the N-terminal cysteine of a prolipoprotein, the first step in the formation of mature lipoproteins. In Lysinibacillus sphaericus (strain C3-41), this protein is Phosphatidylglycerol--prolipoprotein diacylglyceryl transferase.